The chain runs to 145 residues: Large ribosomal subunit protein uL14m (145 aa).

The N-terminal 30 residues, 1-30, are a transit peptide targeting the mitochondrion; sequence MAVLTGLFGFFAYVRGAVSQRCFSTSGSLS.

Belongs to the universal ribosomal protein uL14 family. In terms of assembly, component of the mitochondrial ribosome large subunit (39S) which comprises a 16S rRNA and about 50 distinct proteins. Interacts with MALSU1.

It localises to the mitochondrion. Its function is as follows. May form part of 2 intersubunit bridges in the assembled ribosome. Upon binding to MALSU1, intersubunit bridge formation is blocked, preventing ribosome formation and repressing translation. The sequence is that of Large ribosomal subunit protein uL14m (Mrpl14) from Rattus norvegicus (Rat).